Consider the following 1108-residue polypeptide: MRKDERERDTPAMRSPPPPPPPATATAASPPESLRNGYVKSCVSPLRQDPPRSFFFHLCRFCNVEPPAASLRAGARLSLAALAAFVLAALLGAGPERWAAAATGLRTLLSACSLSLSPLFSIACAFFFLTCFLTRAQRGPDRGAGSWWLLALPACCYLGDFAAWQWWSWLRGEPAAAAAGRLCLVLSCVGLLTLAPRVRLRHGVLVLLFAGLVWWVSFSGLGALPPALRPLLSCLVGGAGCLLALGLDHFFHVRGASPPPRSASTADEKVPVIRPRRRSSCVSLGESAAGYYGSGKMFRRPSLPCISREQMILWDWDLKQWCKPHYQNSGGGNGVDLSVLNEARNMVSDLLIDPSLPPQVISSLRSISSLMGAFSGSCRPKINSFTPFPGFYPCSEVEDPVEKGDRKLHKGLSSKPSFPTAQLRRSSGASGLLTSEHHSRWDRSGGKRPYQELSVSSHGCHLNGPFSSNLMTIPKQRSSSVSLTHHAGLRRAGALPSPSLLNSSSHVPVSAGCLTNRSPVGFLDTSDFLTKPSVTLHRSLGSVSSAADFHQYLRNSDSSLCSSCGHQILKYVSTCEPDGTDHHNEKSGEEDSTVFSKERLNIVETQEEETVKEDCRELFLEGDDHLMEEAQQPNIDQEVLLDPMLVEDYDSLIEKMSNWNFQIFELVEKMGEKSGRILSQVMYTLFQDTGLLETFKIPTQEFMNYFRALENGYRDIPYHNRVHATDVLHAVWYLTTRPIPGLQQLHNNHETETKADSDARLSSGQIAYLSSKSCCIPDKSYGCLSSNIPALELMALYVAAAMHDYDHPGRTNAFLVATNAPQAVLYNDRSVLENHHAASAWNLYLSRPEYNFLLNLDHMEFKRFRFLVIEAILATDLKKHFDFLAEFNAKANDVNSNGIEWSSENDRLLVCQVCIKLADINGPAKDRDLHLRWTEGIVNEFYEQGDEEATLGLPISPFMDRSSPQLAKLQESFITHIVGPLCNSYDAAGLLPGQWIEAEEGDDTESDDDDDDDDDDDDDDDEELDSDDEETEDNLNPKPQRRKGRRRIFCQLMHHLTENHKIWKEIIEEEEKCKAEGNKLQVDNASLPQADEIQVIEEADEEEEQMFE.

A compositionally biased stretch (basic and acidic residues) spans 1–11 (MRKDERERDTP). The tract at residues 1–32 (MRKDERERDTPAMRSPPPPPPPATATAASPPE) is disordered. The interaction with RAPGEF3 stretch occupies residues 1–32 (MRKDERERDTPAMRSPPPPPPPATATAASPPE). A compositionally biased stretch (pro residues) spans 14-23 (RSPPPPPPPA). Residue serine 15 is modified to Phosphoserine. Transmembrane regions (helical) follow at residues 73-93 (AGAR…LLGA), 114-134 (LSLS…CFLT), 144-164 (AGSW…FAAW), 175-195 (AAAA…LTLA), 204-224 (VLVL…LGAL), and 231-251 (LLSC…DHFF). Serine 279 carries the phosphoserine; by PKB/AKT1 or PKB/AKT2 modification. 2 positions are modified to phosphoserine: serine 280 and serine 427. The disordered stretch occupies residues 405–448 (DRKLHKGLSSKPSFPTAQLRRSSGASGLLTSEHHSRWDRSGGKR). Polar residues predominate over residues 414-433 (SKPSFPTAQLRRSSGASGLL). Residues 421–445 (AQLRRSSGASGLLTSEHHSRWDRSG) are interaction with PIK3R6. A compositionally biased stretch (basic and acidic residues) spans 435 to 445 (SEHHSRWDRSG). One can recognise a PDEase domain in the interval 633–1070 (PNIDQEVLLD…KIWKEIIEEE (438 aa)). The active-site Proton donor is the histidine 719. Histidine 719 provides a ligand contact to AMP. Histidine 723, histidine 803, aspartate 804, and aspartate 919 together coordinate Mg(2+). AMP-binding residues include aspartate 804, aspartate 919, and glutamine 970. Positions 999-1033 (EEGDDTESDDDDDDDDDDDDDDDEELDSDDEETED) are enriched in acidic residues. The segment at 999–1042 (EEGDDTESDDDDDDDDDDDDDDDEELDSDDEETEDNLNPKPQRR) is disordered.

The protein belongs to the cyclic nucleotide phosphodiesterase family. PDE3 subfamily. As to quaternary structure, homodimer. Interacts with PIK3CG; regulates PDE3B activity and thereby cAMP levels in cells. Interacts with RAPGEF3 and PIK3R6; form a signaling complex that regulates phosphatidylinositol 3-kinase gamma in angiogenesis. Interacts with ABHD15; this interaction regulates PDE3B's stability and expression and, thereby, impacts the antilipolytic action of insulin. Requires Mg(2+) as cofactor. Mn(2+) is required as a cofactor. Phosphorylation at Ser-279 mediates insulin-induced activation of PDE3B. As to expression, abundant in adipose tissues.

It is found in the membrane. It carries out the reaction a nucleoside 3',5'-cyclic phosphate + H2O = a nucleoside 5'-phosphate + H(+). The catalysed reaction is 3',5'-cyclic AMP + H2O = AMP + H(+). The enzyme catalyses 3',5'-cyclic GMP + H2O = GMP + H(+). With respect to regulation, inhibited by cGMP. Functionally, cyclic nucleotide phosphodiesterase with a dual-specificity for the second messengers cAMP and cGMP, which are key regulators of many important physiological processes. Regulates angiogenesis by inhibiting the cAMP-dependent guanine nucleotide exchange factor RAPGEF3 and downstream phosphatidylinositol 3-kinase gamma-mediated signaling. Controls cardiac contractility by reducing cAMP concentration in cardiocytes. In Rattus norvegicus (Rat), this protein is cGMP-inhibited 3',5'-cyclic phosphodiesterase 3B.